The sequence spans 676 residues: DNA-directed RNA polymerase subunit beta' (676 aa).

Positions 69, 71, 87, and 90 each coordinate Zn(2+). Mg(2+) contacts are provided by Asp489, Asp491, and Asp493.

Belongs to the RNA polymerase beta' chain family. RpoC1 subfamily. As to quaternary structure, in plastids the minimal PEP RNA polymerase catalytic core is composed of four subunits: alpha, beta, beta', and beta''. When a (nuclear-encoded) sigma factor is associated with the core the holoenzyme is formed, which can initiate transcription. Mg(2+) is required as a cofactor. The cofactor is Zn(2+).

Its subcellular location is the plastid. The protein localises to the chloroplast. The catalysed reaction is RNA(n) + a ribonucleoside 5'-triphosphate = RNA(n+1) + diphosphate. Its function is as follows. DNA-dependent RNA polymerase catalyzes the transcription of DNA into RNA using the four ribonucleoside triphosphates as substrates. The polypeptide is DNA-directed RNA polymerase subunit beta' (Lolium perenne (Perennial ryegrass)).